The sequence spans 111 residues: MLSASCSGLVILLIFRRTSGDSVTQTEGPVTLPERAALTLNCTYQSSYSTFLFWYVQYLNKEPELLLKSSENQETDSRGFQASPIKSDSSFHLEKPSVQLSDSAVYYCALR.

The first 20 residues, 1-20 (MLSASCSGLVILLIFRRTSG), serve as a signal peptide directing secretion. Residues 21 to 111 (DSVTQTEGPV…DSAVYYCALR (91 aa)) enclose the Ig-like domain. A glycan (N-linked (GlcNAc...) asparagine) is linked at Asn41. A disulfide bond links Cys42 and Cys108.

In terms of assembly, alpha-beta TR is a heterodimer composed of an alpha and beta chain; disulfide-linked. The alpha-beta TR is associated with the transmembrane signaling CD3 coreceptor proteins to form the TR-CD3 (TcR or TCR). The assembly of alpha-beta TR heterodimers with CD3 occurs in the endoplasmic reticulum where a single alpha-beta TR heterodimer associates with one CD3D-CD3E heterodimer, one CD3G-CD3E heterodimer and one CD247 homodimer forming a stable octameric structure. CD3D-CD3E and CD3G-CD3E heterodimers preferentially associate with TR alpha and TR beta chains, respectively. The association of the CD247 homodimer is the last step of TcR assembly in the endoplasmic reticulum and is required for transport to the cell surface.

It localises to the cell membrane. Its function is as follows. V region of the variable domain of T cell receptor (TR) alpha chain that participates in the antigen recognition. Alpha-beta T cell receptors are antigen specific receptors which are essential to the immune response and are present on the cell surface of T lymphocytes. Recognize peptide-major histocompatibility (MH) (pMH) complexes that are displayed by antigen presenting cells (APC), a prerequisite for efficient T cell adaptive immunity against pathogens. Binding of alpha-beta TR to pMH complex initiates TR-CD3 clustering on the cell surface and intracellular activation of LCK that phosphorylates the ITAM motifs of CD3G, CD3D, CD3E and CD247 enabling the recruitment of ZAP70. In turn ZAP70 phosphorylates LAT, which recruits numerous signaling molecules to form the LAT signalosome. The LAT signalosome propagates signal branching to three major signaling pathways, the calcium, the mitogen-activated protein kinase (MAPK) kinase and the nuclear factor NF-kappa-B (NF-kB) pathways, leading to the mobilization of transcription factors that are critical for gene expression and essential for T cell growth and differentiation. The T cell repertoire is generated in the thymus, by V-(D)-J rearrangement. This repertoire is then shaped by intrathymic selection events to generate a peripheral T cell pool of self-MH restricted, non-autoaggressive T cells. Post-thymic interaction of alpha-beta TR with the pMH complexes shapes TR structural and functional avidity. This chain is T cell receptor alpha variable 18, found in Homo sapiens (Human).